The sequence spans 601 residues: Deuterosome assembly protein 1 (601 aa).

Coiled coils occupy residues 14 to 59 (CEAE…NAQT), 86 to 197 (TQNY…KQQR), and 226 to 278 (IEKL…LQSR). 2 disordered regions span residues 115-135 (MKQN…PFEL) and 188-213 (QTQL…CESS). Over residues 121–131 (HRKEASNKDET) the composition is skewed to basic and acidic residues. The disordered stretch occupies residues 307–326 (DNRKRVESSYSPSTKEPERK). The stretch at 340-397 (HEKELNKMRSQLYQEEDLCSEQERMRNEISELTQELHQKEVTIATIMKKAALLERQLK) forms a coiled coil. Ser544 is modified (phosphoserine). A coiled-coil region spans residues 555–586 (AAQHFLMEEEKRAKELEKLLNTHIDELQRHTE).

This sequence belongs to the CEP63 family. Interacts with CEP152; the interaction is mutually exclusive with CEP63.

Its subcellular location is the cytoplasm. Its function is as follows. Key structural component of the deuterosome, a structure that promotes de novo centriole amplification in multiciliated cells. Deuterosome-mediated centriole amplification occurs in terminally differentiated multiciliated cells and can generate more than 100 centrioles. Probably sufficient for the specification and formation of the deuterosome inner core. Interacts with CEP152 and recruits PLK4 to activate centriole biogenesis. This Rattus norvegicus (Rat) protein is Deuterosome assembly protein 1.